The following is a 211-amino-acid chain: Urease accessory protein UreG (211 aa).

GTP is bound at residue 11 to 18 (GPVGAGKT).

It belongs to the SIMIBI class G3E GTPase family. UreG subfamily. In terms of assembly, homodimer. UreD, UreF and UreG form a complex that acts as a GTP-hydrolysis-dependent molecular chaperone, activating the urease apoprotein by helping to assemble the nickel containing metallocenter of UreC. The UreE protein probably delivers the nickel.

It localises to the cytoplasm. Facilitates the functional incorporation of the urease nickel metallocenter. This process requires GTP hydrolysis, probably effectuated by UreG. This chain is Urease accessory protein UreG, found in Actinobacillus pleuropneumoniae serotype 7 (strain AP76).